Reading from the N-terminus, the 162-residue chain is Shikimate kinase (162 aa).

11–16 (GSGKSS) contributes to the ATP binding site. Serine 15 is a binding site for Mg(2+). 3 residues coordinate substrate: aspartate 33, arginine 57, and glycine 80. Residue arginine 116 participates in ATP binding. Residue arginine 132 coordinates substrate.

This sequence belongs to the shikimate kinase family. Monomer. It depends on Mg(2+) as a cofactor.

The protein resides in the cytoplasm. It catalyses the reaction shikimate + ATP = 3-phosphoshikimate + ADP + H(+). It functions in the pathway metabolic intermediate biosynthesis; chorismate biosynthesis; chorismate from D-erythrose 4-phosphate and phosphoenolpyruvate: step 5/7. In terms of biological role, catalyzes the specific phosphorylation of the 3-hydroxyl group of shikimic acid using ATP as a cosubstrate. The chain is Shikimate kinase from Helicobacter pylori (strain P12).